The primary structure comprises 389 residues: Alkanesulfonate monooxygenase (389 aa).

This sequence belongs to the SsuD family.

The enzyme catalyses an alkanesulfonate + FMNH2 + O2 = an aldehyde + FMN + sulfite + H2O + 2 H(+). In terms of biological role, catalyzes the desulfonation of aliphatic sulfonates. The sequence is that of Alkanesulfonate monooxygenase from Variovorax paradoxus (strain S110).